Consider the following 309-residue polypeptide: General transcription factor IIH subunit 3 (309 aa).

A C4-type zinc finger spans residues C269 to C286.

It belongs to the TFB4 family. In terms of assembly, part of a TFIID-containing RNA polymerase II pre-initiation complex that is composed of TBP and at least GTF2A1, GTF2A2, GTF2E1, GTF2E2, GTF2F1, GTF2H2, GTF2H3, GTF2H4, GTF2H5, GTF2B, TCEA1, ERCC2, ERCC3, TAF1, TAF2, TAF3, TAF4, TAF5, TAF6, TAF7, TAF8, TAF9, TAF10, TAF11, TAF12 and TAF13. Component of the 7-subunit TFIIH core complex composed of XPB/ERCC3, XPD/ERCC2, GTF2H1, GTF2H2, GTF2H3, GTF2H4 and GTF2H5, which is active in NER. The core complex associates with the 3-subunit CDK-activating kinase (CAK) module composed of CCNH/cyclin H, CDK7 and MNAT1 to form the 10-subunit holoenzyme (holo-TFIIH) active in transcription. Interacts with RARA; the interaction requires prior phosphorylation of RARA on 'Ser-369' which then enhances interaction of RARA with CDK7.

The protein resides in the nucleus. Functionally, component of the general transcription and DNA repair factor IIH (TFIIH) core complex, which is involved in general and transcription-coupled nucleotide excision repair (NER) of damaged DNA and, when complexed to CAK, in RNA transcription by RNA polymerase II. In NER, TFIIH acts by opening DNA around the lesion to allow the excision of the damaged oligonucleotide and its replacement by a new DNA fragment. In transcription, TFIIH has an essential role in transcription initiation. When the pre-initiation complex (PIC) has been established, TFIIH is required for promoter opening and promoter escape. Phosphorylation of the C-terminal tail (CTD) of the largest subunit of RNA polymerase II by the kinase module CAK controls the initiation of transcription. This chain is General transcription factor IIH subunit 3 (Gtf2h3), found in Rattus norvegicus (Rat).